Reading from the N-terminus, the 267-residue chain is Putative transcription factor Ovo-like 1 (267 aa).

C2H2-type zinc fingers lie at residues 118-140, 146-168, 174-197, and 213-235; these read FTCH…MKCH, HLCT…VRTH, YKCS…KKIH, and YVCE…LKEH.

The protein resides in the nucleus. Its function is as follows. Putative transcription factor. Involved in hair formation and spermatogenesis. May function in the differentiation and/or maintenance of the urogenital system. The protein is Putative transcription factor Ovo-like 1 (OVOL1) of Bos taurus (Bovine).